Here is a 256-residue protein sequence, read N- to C-terminus: uncharacterized protein (256 aa).

Disordered stretches follow at residues 1 to 38 and 51 to 75; these read MGKT…PNRD and PRPS…RCPQ.

This is an uncharacterized protein from Homo sapiens (Human).